The chain runs to 317 residues: Ribosomal large subunit pseudouridine synthase D (317 aa).

In terms of domain architecture, S4 RNA-binding spans 19–83 (NRLDQVLASL…AKNDYQAENI (65 aa)). Asp140 is a catalytic residue.

This sequence belongs to the pseudouridine synthase RluA family.

The protein resides in the cytoplasm. It carries out the reaction uridine(1911/1915/1917) in 23S rRNA = pseudouridine(1911/1915/1917) in 23S rRNA. Its function is as follows. Responsible for synthesis of pseudouridine from uracil at positions 1911, 1915 and 1917 in 23S ribosomal RNA. The chain is Ribosomal large subunit pseudouridine synthase D (rluD) from Buchnera aphidicola subsp. Baizongia pistaciae (strain Bp).